The chain runs to 158 residues: NAD(P)H-quinone oxidoreductase subunit J, chloroplastic (158 aa).

The protein belongs to the complex I 30 kDa subunit family. NDH is composed of at least 16 different subunits, 5 of which are encoded in the nucleus.

It localises to the plastid. The protein localises to the chloroplast thylakoid membrane. It carries out the reaction a plastoquinone + NADH + (n+1) H(+)(in) = a plastoquinol + NAD(+) + n H(+)(out). It catalyses the reaction a plastoquinone + NADPH + (n+1) H(+)(in) = a plastoquinol + NADP(+) + n H(+)(out). Its function is as follows. NDH shuttles electrons from NAD(P)H:plastoquinone, via FMN and iron-sulfur (Fe-S) centers, to quinones in the photosynthetic chain and possibly in a chloroplast respiratory chain. The immediate electron acceptor for the enzyme in this species is believed to be plastoquinone. Couples the redox reaction to proton translocation, and thus conserves the redox energy in a proton gradient. The sequence is that of NAD(P)H-quinone oxidoreductase subunit J, chloroplastic from Piper cenocladum (Ant piper).